Consider the following 935-residue polypeptide: LPS-assembly protein LptD (935 aa).

The signal sequence occupies residues Met-1 to Ala-33. Positions Lys-52–Pro-85 are disordered. Residues Glu-65 to Ala-79 show a composition bias toward low complexity.

The protein belongs to the LptD family. As to quaternary structure, component of the lipopolysaccharide transport and assembly complex. Interacts with LptE and LptA.

Its subcellular location is the cell outer membrane. Functionally, together with LptE, is involved in the assembly of lipopolysaccharide (LPS) at the surface of the outer membrane. The protein is LPS-assembly protein LptD of Pseudomonas putida (strain ATCC 700007 / DSM 6899 / JCM 31910 / BCRC 17059 / LMG 24140 / F1).